A 193-amino-acid polypeptide reads, in one-letter code: MPTTSRPALDVKGGTSPAKEDANQEMSSVAYSNLAVKDRKAVAILHYPGVASNGTKASGAPTSSSGSPIGSPTTTPPTKPPSFNLHPAPHLLASMHLQKLNSQYQGMAAATPGQPGEAGPLQNWDFGAQAGGAESLSPSAGAQSPAIIDSDPVDEEVLMSLVVELGLDRANELPELWLGQNEFDFTADFPSSC.

Disordered stretches follow at residues 1–26 (MPTTSRPALDVKGGTSPAKEDANQEM), 50–88 (VASNGTKASGAPTSSSGSPIGSPTTTPPTKPPSFNLHPA), and 106–147 (GMAA…SPAI). The segment covering 54-73 (GTKASGAPTSSSGSPIGSPT) has biased composition (low complexity). Positions 158–167 (LMSLVVELGL) match the Nuclear export signal motif.

The protein belongs to the CITED family. As to quaternary structure, interacts (via C-terminus) with CREBBP. Interacts with EGR2. Homodimer. Binds to RBM14. Interacts (via N-terminus) with HSPA8; the interaction suppresses the association of CITED1 with p300/CBP and SMAD-mediated transcription transactivation. Interacts (via C-terminus) with TOX3 (via HGM box); the interaction increases estrogen-response element (ERE)-dependent transcription and protection against cell death. Interacts with ESR1; the interaction occurs in a estrogen-dependent manner. Interacts (unphosphorylated form preferentially and via C-terminus) with EP300. In terms of processing, phosphorylated. Phosphorylation changes in a cell cycle-dependent manner and reduces its transcriptional coactivator activity. In terms of tissue distribution, expressed only in melanocytes and testis.

Its subcellular location is the nucleus. The protein localises to the cytoplasm. Functionally, transcriptional coactivator of the p300/CBP-mediated transcription complex. Enhances SMAD-mediated transcription by strengthening the functional link between the DNA-binding SMAD transcription factors and the p300/CBP transcription coactivator complex. Stimulates estrogen-dependent transactivation activity mediated by estrogen receptors signaling; stabilizes the interaction of estrogen receptor ESR1 and histone acetyltransferase EP300. Positively regulates TGF-beta signaling through its association with the SMAD/p300/CBP-mediated transcriptional coactivator complex. Induces transcription from estrogen-responsive promoters and protection against cell death. Potentiates EGR2-mediated transcriptional activation activity from the ERBB2 promoter. Acts as an inhibitor of osteoblastic mineralization through a cAMP-dependent parathyroid hormone receptor signaling. May play a role in pigmentation of melanocytes. Associates with chromatin to the estrogen-responsive TGF-alpha promoter region in a estrogen-dependent manner. In Homo sapiens (Human), this protein is Cbp/p300-interacting transactivator 1 (CITED1).